The chain runs to 447 residues: Ribosomal protein uS12 methylthiotransferase RimO (447 aa).

The MTTase N-terminal domain occupies 15–125 (PRVGFVSLGC…VMQAIHRHLP (111 aa)). The [4Fe-4S] cluster site is built by cysteine 24, cysteine 60, cysteine 89, cysteine 156, cysteine 160, and cysteine 163. Positions 142–379 (LTPKHYAYLK…MQWQEEISKK (238 aa)) constitute a Radical SAM core domain. In terms of domain architecture, TRAM spans 379-447 (KRLAGKKGRI…GIHDLWAKKI (69 aa)).

Belongs to the methylthiotransferase family. RimO subfamily. The cofactor is [4Fe-4S] cluster.

The protein resides in the cytoplasm. It carries out the reaction L-aspartate(89)-[ribosomal protein uS12]-hydrogen + (sulfur carrier)-SH + AH2 + 2 S-adenosyl-L-methionine = 3-methylsulfanyl-L-aspartate(89)-[ribosomal protein uS12]-hydrogen + (sulfur carrier)-H + 5'-deoxyadenosine + L-methionine + A + S-adenosyl-L-homocysteine + 2 H(+). Catalyzes the methylthiolation of an aspartic acid residue of ribosomal protein uS12. The protein is Ribosomal protein uS12 methylthiotransferase RimO of Nitrosomonas europaea (strain ATCC 19718 / CIP 103999 / KCTC 2705 / NBRC 14298).